Consider the following 218-residue polypeptide: Large ribosomal subunit protein uL3 (218 aa).

The interval 121–163 is disordered; it reads GYQKRHGFSRGPMTHGSKNHREPGSIGPGTTPGRIYPGKRMAG.

It belongs to the universal ribosomal protein uL3 family. In terms of assembly, part of the 50S ribosomal subunit. Forms a cluster with proteins L14 and L19.

In terms of biological role, one of the primary rRNA binding proteins, it binds directly near the 3'-end of the 23S rRNA, where it nucleates assembly of the 50S subunit. In Parasynechococcus marenigrum (strain WH8102), this protein is Large ribosomal subunit protein uL3.